The following is a 381-amino-acid chain: Cytochrome b (381 aa).

The next 4 membrane-spanning stretches (helical) occupy residues 34–54, 78–99, 114–134, and 179–199; these read FGSL…FLAM, WLIR…YIHI, WNIG…GYVL, and FFAF…IHVL. Heme b-binding residues include His84 and His98. Positions 183 and 197 each coordinate heme b. Residue His202 participates in a ubiquinone binding. 4 consecutive transmembrane segments (helical) span residues 227 to 247, 289 to 309, 321 to 341, and 348 to 368; these read YKDA…ALFL, LGGV…PLLH, LTQV…WIGG, and FILI…IAMP.

The protein belongs to the cytochrome b family. In terms of assembly, the cytochrome bc1 complex contains 3 respiratory subunits (MT-CYB, CYC1 and UQCRFS1), 2 core proteins (UQCRC1 and UQCRC2) and probably 6 low-molecular weight proteins. It depends on heme b as a cofactor.

Its subcellular location is the mitochondrion inner membrane. Component of the ubiquinol-cytochrome c reductase complex (complex III or cytochrome b-c1 complex) that is part of the mitochondrial respiratory chain. The b-c1 complex mediates electron transfer from ubiquinol to cytochrome c. Contributes to the generation of a proton gradient across the mitochondrial membrane that is then used for ATP synthesis. The sequence is that of Cytochrome b (mt-cyb) from Isurus paucus (Longfin mako shark).